The primary structure comprises 497 residues: Delayed-rectifier potassium channel regulatory subunit KCNS1 (497 aa).

The Cytoplasmic segment spans residues 1 to 186 (MVSEFPGPGS…LTMENPGYSL (186 aa)). The chain crosses the membrane as a helical span at residues 187–208 (PSKLFSCVSIGVVLASIAAMCI). Topologically, residues 209 to 239 (HSLPEYQAREAAAAVAAVAAGRSAEEVRDDP) are extracellular. The chain crosses the membrane as a helical span at residues 240–262 (VLRRLEYFCIAWFSFEVSSRLLL). Residues 263–273 (APSTRNFFCHP) lie on the Cytoplasmic side of the membrane. The helical transmembrane segment at 274–291 (LNLIDIVSVLPFYLTLLA) threads the bilayer. Over 292–309 (GAALGDQRGASGEELGDL) the chain is Extracellular. Residues 310-330 (GKVVQVFRLMRIFRVLKLARH) form a helical; Voltage-sensor membrane-spanning segment. Topologically, residues 331 to 345 (STGLRSLGATLKHSY) are cytoplasmic. A helical transmembrane segment spans residues 346-367 (REVGILLLYLAVGVSVFSGVAY). Topologically, residues 368 to 379 (TAEEENEGFHTI) are extracellular. Positions 380 to 391 (PACWWWGTVSMT) form an intramembrane region, helical. The Selectivity filter motif lies at 392–397 (TVGYGD). The stretch at 392–399 (TVGYGDVV) is an intramembrane region. Residues 400–406 (PETVGGK) are Extracellular-facing. A helical membrane pass occupies residues 407-435 (LAASGCILGGILVVALPITIIFNKFSHFY). Over 436–497 (RRQKALEAAV…PREPAKSHSY (62 aa)) the chain is Cytoplasmic. The segment at 464–497 (SDVSLETSRDTSQEGRSTDLETQAPREPAKSHSY) is disordered. Over residues 470-482 (TSRDTSQEGRSTD) the composition is skewed to basic and acidic residues.

This sequence belongs to the potassium channel family. S (TC 1.A.1.2) subfamily. Kv9.1/KCNS1 sub-subfamily. As to quaternary structure, heterotetramer with KCNB1 and KCNB2. Does not form homomultimers. Detected in brain, but not in the other tissues tested. The highest levels of expression are in olfactory bulb, cerebral cortex, hippocampus, habenula, basolateral amygdaloid nuclei and cerebellum.

It localises to the cell membrane. Functionally, potassium channel regulatory subunit that modulate the delayed rectifier voltage-gated potassium channel activity of KCNB1 and KCNB2 by altering their kinetics, expression levels, and shifting the half-inactivation potential to more polarized values. While it does not form functional channels on its own, it can form functional heterotetrameric channels with KCNB1 and KCNB2. Each regulatory subunit has unique regulatory properties that can lead to extensive inhibition, significant changes in kinetics, and/or substantial shifts in the voltage dependencies of the inactivation process. The chain is Delayed-rectifier potassium channel regulatory subunit KCNS1 from Mus musculus (Mouse).